The following is a 274-amino-acid chain: Probable formate transporter (274 aa).

The next 7 helical transmembrane spans lie at 31 to 51 (IVLSFLAGAYIAFGGLLAEVV), 62 to 82 (AGLVKLVFGAVFPVGLMLVVI), 118 to 138 (VFNLVGAVFVAYFLAVATGIL), 176 to 196 (AFWRAVGCNWLVCLAVYLAIA), 200 to 220 (IIGKIWGIWFPIFAFVAIGFE), 226 to 246 (MFFIPVGIFLGGVTWSQFFMN), and 248 to 268 (LIPVTLGNIVGGAIFVACLYW).

This sequence belongs to the FNT transporter (TC 1.A.16) family.

The protein localises to the cell membrane. In terms of biological role, may act as a formate transporter. This chain is Probable formate transporter (fdhC), found in Methanothermobacter thermautotrophicus (Methanobacterium thermoformicicum).